Consider the following 626-residue polypeptide: Chaperone protein HtpG (626 aa).

The a; substrate-binding stretch occupies residues 1-341; it reads MIKKEFKAES…SEDLSLNISR (341 aa). Residues 342-552 are b; it reads EMLQHDRQLK…DGDVTIEMEK (211 aa). The interval 553–626 is c; sequence ILSAMPNNQE…FTNDICKLMS (74 aa).

Belongs to the heat shock protein 90 family. As to quaternary structure, homodimer.

It is found in the cytoplasm. Molecular chaperone. Has ATPase activity. This is Chaperone protein HtpG from Alkaliphilus metalliredigens (strain QYMF).